We begin with the raw amino-acid sequence, 66 residues long: Metallothionein-like protein type 3 (66 aa).

Belongs to the metallothionein superfamily. Type 15 family.

Functionally, metallothioneins have a high content of cysteine residues that bind various heavy metals. The sequence is that of Metallothionein-like protein type 3 (MT2) from Malus domestica (Apple).